Reading from the N-terminus, the 553-residue chain is Transcriptional regulator HilA (553 aa).

The ompR/PhoB-type DNA-binding region spans 11–107; it reads NKKFVFDDFI…LYGQGYRFNR (97 aa). Residue aspartate 62 is modified to 4-aspartylphosphate. Residues 372 to 405 form a TPR repeat; that stretch reads ADIKYYYGWNLFMAGQLEEALQTINECLKLDPTR.

Its function is as follows. The main transcriptional regulator of the Salmonella pathogenicity island 1 (SPI1) gene expression. Activates the expression of invasion genes by a direct action at their promoters and also indirectly by increasing the level of invF. Also binds upstream of prgH and directly activates the expression of prgHIJK operon. This is Transcriptional regulator HilA (hilA) from Salmonella paratyphi A (strain ATCC 9150 / SARB42).